We begin with the raw amino-acid sequence, 282 residues long: Sulfur carrier protein FdhD (282 aa).

The active-site Cysteine persulfide intermediate is the C115.

Belongs to the FdhD family.

It is found in the cytoplasm. Its function is as follows. Required for formate dehydrogenase (FDH) activity. Acts as a sulfur carrier protein that transfers sulfur from IscS to the molybdenum cofactor prior to its insertion into FDH. The polypeptide is Sulfur carrier protein FdhD (Streptomyces coelicolor (strain ATCC BAA-471 / A3(2) / M145)).